Consider the following 645-residue polypeptide: Putative bifunctional exonuclease/endonuclease protein MT2247 (645 aa).

Residues 44-207 (VVVDLETTGG…DDARATVDVL (164 aa)) enclose the Exonuclease domain. The GIY-YIG domain maps to 248–326 (HRPGVYLFRG…LSTHAPPYNR (79 aa)). The segment at 603–645 (WQSDLPTEPHPSREQLFGRTGVDCRTGPPQPLLPGRQPFSTAG) is disordered. Over residues 635–645 (LPGRQPFSTAG) the composition is skewed to low complexity.

The protein is Putative bifunctional exonuclease/endonuclease protein MT2247 of Mycobacterium tuberculosis (strain CDC 1551 / Oshkosh).